The chain runs to 217 residues: Probable transaldolase (217 aa).

Catalysis depends on lysine 83, which acts as the Schiff-base intermediate with substrate.

This sequence belongs to the transaldolase family. Type 3B subfamily.

It is found in the cytoplasm. It carries out the reaction D-sedoheptulose 7-phosphate + D-glyceraldehyde 3-phosphate = D-erythrose 4-phosphate + beta-D-fructose 6-phosphate. Its pathway is carbohydrate degradation; pentose phosphate pathway; D-glyceraldehyde 3-phosphate and beta-D-fructose 6-phosphate from D-ribose 5-phosphate and D-xylulose 5-phosphate (non-oxidative stage): step 2/3. Its function is as follows. Transaldolase is important for the balance of metabolites in the pentose-phosphate pathway. This is Probable transaldolase from Lactiplantibacillus plantarum (strain ATCC BAA-793 / NCIMB 8826 / WCFS1) (Lactobacillus plantarum).